The primary structure comprises 117 residues: Putative pterin-4-alpha-carbinolamine dehydratase (117 aa).

Belongs to the pterin-4-alpha-carbinolamine dehydratase family.

It catalyses the reaction (4aS,6R)-4a-hydroxy-L-erythro-5,6,7,8-tetrahydrobiopterin = (6R)-L-erythro-6,7-dihydrobiopterin + H2O. The sequence is that of Putative pterin-4-alpha-carbinolamine dehydratase from Aeromonas salmonicida (strain A449).